The chain runs to 252 residues: 4-formylbenzenesulfonate dehydrogenase TsaC1/TsaC2 (252 aa).

Residues 9 to 36 (IVTG…LVAD) and D62 contribute to the NAD(+) site. Substrate is bound at residue S142. Residue Y155 is the Proton acceptor of the active site. Position 159 (K159) interacts with NAD(+).

Belongs to the short-chain dehydrogenases/reductases (SDR) family. As to quaternary structure, homodimer.

The catalysed reaction is 4-formylbenzenesulfonate + NAD(+) + H2O = 4-sulfobenzoate + NADH + 2 H(+). Functionally, involved in the toluene-4-sulfonate degradation pathway. Does not discriminate between the sulfonate and the carboxyl substituents and can also be involved in the p-toluenecarboxylate degradation pathway. This Comamonas testosteroni (Pseudomonas testosteroni) protein is 4-formylbenzenesulfonate dehydrogenase TsaC1/TsaC2 (tsaC1).